Reading from the N-terminus, the 299-residue chain is MTLNLDEAKITAEVLTTALPYIQRFVDKIIVVKYGGNAMTDPALESSFARDIVLLKTVGMHPVVVHGGGPQVDNLLKELGRHSDRIDGMRVTDKDTMDIVEMVLGGNVNKSIVSLINKHGGCAIGLTGKDANLILAKKLMMEKIGVDGVAVPVDLGFVGDVVSVNKDVINMLIASDFIPVIAPLGVDEEGNTYNINADLVAGKVAEFLQAEKLMLLTNIKGVLGRDGEVVTGLTPKTVDSLIEDGTISGGMIPKIQCALDAVRSGVKSAVIVDGRVPHATLLEIFTNEGVGTLISRDLG.

Substrate is bound by residues 68 to 69, Arg-90, and Asn-194; that span reads GG.

This sequence belongs to the acetylglutamate kinase family. ArgB subfamily.

Its subcellular location is the cytoplasm. It catalyses the reaction N-acetyl-L-glutamate + ATP = N-acetyl-L-glutamyl 5-phosphate + ADP. The protein operates within amino-acid biosynthesis; L-arginine biosynthesis; N(2)-acetyl-L-ornithine from L-glutamate: step 2/4. Catalyzes the ATP-dependent phosphorylation of N-acetyl-L-glutamate. The chain is Acetylglutamate kinase from Psychrobacter cryohalolentis (strain ATCC BAA-1226 / DSM 17306 / VKM B-2378 / K5).